The following is a 457-amino-acid chain: RuvB-like helicase 1 (457 aa).

Position 72 to 79 (72 to 79 (GAPGTGKT)) interacts with ATP.

The protein belongs to the RuvB family. May form heterododecamers with RVB2. Component of the SWR1 chromatin remodeling complex, the INO80 chromatin remodeling complex, and of the R2TP complex.

The protein localises to the nucleus. The catalysed reaction is ATP + H2O = ADP + phosphate + H(+). Functionally, DNA helicase which participates in several chromatin remodeling complexes, including the SWR1 and the INO80 complexes. The SWR1 complex mediates the ATP-dependent exchange of histone H2A for the H2A variant HZT1 leading to transcriptional regulation of selected genes by chromatin remodeling. The INO80 complex remodels chromatin by shifting nucleosomes and is involved in DNA repair. Also involved in pre-rRNA processing. The polypeptide is RuvB-like helicase 1 (RBV1) (Debaryomyces hansenii (strain ATCC 36239 / CBS 767 / BCRC 21394 / JCM 1990 / NBRC 0083 / IGC 2968) (Yeast)).